The following is a 240-amino-acid chain: MKLEFKKSISNKVIIILGAMFVFLFLLGYFLLVGIDKVSNVTPEMFFFSSYTVATQFGLMLFSFVIAFFINREYSNKNILFYKLIGENIYTFFYKKIAVLFLECFAFITLGLLIISLMYHDFSHFALLLFLFSAVILQYILIIGTISVLCPNILISIGVSIVYWMTSVILVAISNKTFGFIAPFEAGNTMYPRIERVLQSDNMTLGSNDVLFIILYLVSIIIINAIVLRFSKTRWIKMGL.

The next 6 helical transmembrane spans lie at 13–33, 50–70, 97–117, 126–146, 153–173, and 210–230; these read VIII…FLLV, SYTV…AFFI, IAVL…IISL, ALLL…IGTI, ILIS…LVAI, and VLFI…VLRF.

The complex is composed of 2 ATP-binding proteins (YydI), two transmembrane proteins (YydJ).

The protein localises to the cell membrane. Functionally, suggested to be part of an ABC transporter complex YydIJ involved in export of the modified peptide YydF. In Bacillus subtilis (strain 168), this protein is Probable peptide export permease protein YydJ (yydJ).